The following is a 125-amino-acid chain: MIYGIGTDLVDPARIAGSLERYGERFARRVLADSEWSEYVRQTRPEVFLAKRFAAKEAFSKAVGTGLRTPVMFGNIAVQHDTQGKPYFEFHQELIDWIGQRGIVSHHLSISDELTLASAFVVLEK.

2 residues coordinate Mg(2+): Asp-8 and Glu-57.

The protein belongs to the P-Pant transferase superfamily. AcpS family. Mg(2+) is required as a cofactor.

The protein localises to the cytoplasm. The enzyme catalyses apo-[ACP] + CoA = holo-[ACP] + adenosine 3',5'-bisphosphate + H(+). Functionally, transfers the 4'-phosphopantetheine moiety from coenzyme A to a Ser of acyl-carrier-protein. In Nitrosomonas eutropha (strain DSM 101675 / C91 / Nm57), this protein is Holo-[acyl-carrier-protein] synthase.